The chain runs to 610 residues: F-box/LRR-repeat protein 4 (610 aa).

The 48-residue stretch at 5–52 folds into the F-box domain; sequence DRINNCLPEELILEIFRRLESKPNRDACSLVCKRWLSLERFSRTTLRI. LRR repeat units lie at residues 53–79, 124–149, 150–175, 178–200, 201–227, 228–253, 256–277, 278–303, 304–329, 330–355, 356–381, 382–407, 408–433, 434–459, 460–484, 485–510, 511–536, 537–562, and 563–588; these read GASF…HVDE, SSSL…SLIW, CPNV…DLQG, VGDQ…NLRF, CEGL…GVAA, SAKI…YLDS, IHDK…LKLQ, CVSV…ALYS, FQHF…TLSD, CYFV…EING, CHNI…ALLY, CQRI…HLVD, CSGI…HIRR, CYEI…SLRF, CDKV…NVSG, CNQI…DISV, LQNI…VLSH, CHHI…HMVY, and CPGI…LIEK. Residues 88–125 form a disordered region; it reads LSPSPKRKRGRDSSSPSSSKRKKLTDKTHSGAENVESS.

The polypeptide is F-box/LRR-repeat protein 4 (FBL4) (Arabidopsis thaliana (Mouse-ear cress)).